Consider the following 223-residue polypeptide: NAD(P)H-hydrate epimerase (223 aa).

Residues 9–211 enclose the YjeF N-terminal domain; that stretch reads AIKLDEELMG…ELKDKLHLIL (203 aa). 60–64 lines the (6S)-NADPHX pocket; the sequence is NNGGD. 2 residues coordinate K(+): Asn-61 and Asp-120. (6S)-NADPHX contacts are provided by residues 124–130 and Asp-153; that span reads GFSFKGP. A K(+)-binding site is contributed by Ser-156.

Belongs to the NnrE/AIBP family. K(+) serves as cofactor.

The enzyme catalyses (6R)-NADHX = (6S)-NADHX. It catalyses the reaction (6R)-NADPHX = (6S)-NADPHX. In terms of biological role, catalyzes the epimerization of the S- and R-forms of NAD(P)HX, a damaged form of NAD(P)H that is a result of enzymatic or heat-dependent hydration. This is a prerequisite for the S-specific NAD(P)H-hydrate dehydratase to allow the repair of both epimers of NAD(P)HX. This is NAD(P)H-hydrate epimerase from Entamoeba histolytica (strain ATCC 30459 / HM-1:IMSS / ABRM).